The sequence spans 251 residues: UDP-Glc:alpha-D-GlcNAc-diphosphoundecaprenol beta-1,3-glucosyltransferase WfaP (251 aa).

Belongs to the glycosyltransferase 2 family. Requires Mn(2+) as cofactor. Mg(2+) is required as a cofactor.

It is found in the cell inner membrane. The enzyme catalyses N-acetyl-alpha-D-glucosaminyl-di-trans,octa-cis-undecaprenyl diphosphate + UDP-alpha-D-glucose = beta-D-Glc-(1-&gt;3)-alpha-D-GlcNAc-di-trans,octa-cis-undecaprenyl diphosphate + UDP + H(+). It functions in the pathway bacterial outer membrane biogenesis; lipopolysaccharide biosynthesis. Functionally, catalyzes the addition of Glc, the second sugar moiety of the O56-antigen repeating unit, to GlcNAc-pyrophosphate-undecaprenol. This is UDP-Glc:alpha-D-GlcNAc-diphosphoundecaprenol beta-1,3-glucosyltransferase WfaP (wfaP) from Escherichia coli.